Consider the following 156-residue polypeptide: Ribosomal RNA large subunit methyltransferase H (156 aa).

S-adenosyl-L-methionine contacts are provided by residues Leu73, Gly104, and Leu123–Leu128.

This sequence belongs to the RNA methyltransferase RlmH family. As to quaternary structure, homodimer.

It localises to the cytoplasm. It carries out the reaction pseudouridine(1915) in 23S rRNA + S-adenosyl-L-methionine = N(3)-methylpseudouridine(1915) in 23S rRNA + S-adenosyl-L-homocysteine + H(+). Functionally, specifically methylates the pseudouridine at position 1915 (m3Psi1915) in 23S rRNA. The protein is Ribosomal RNA large subunit methyltransferase H of Shewanella frigidimarina (strain NCIMB 400).